The primary structure comprises 875 residues: Serine/threonine-protein kinase D2 (875 aa).

Residues 1-33 are disordered; it reads MAAAPSHPAGLPCSPGPGSPPPPGGSDLQSLPP. Residues 14 to 24 show a composition bias toward pro residues; sequence SPGPGSPPPPG. Phosphoserine occurs at positions 26 and 30. Tyr87 carries the phosphotyrosine modification. The Phorbol-ester/DAG-type 1 zinc finger occupies 138 to 188; the sequence is PHALTVHSYRAPAFCDHCGEMLFGLVRQGLKCDGCGLNYHKRCAFSIPNNC. Phosphoserine is present on residues Ser197, Ser198, Ser200, Ser203, Ser206, Ser211, Ser212, and Ser214. Residues 224–247 form a disordered region; it reads RSTTDLLPRRPPSSSSSSSSSSFY. The span at 236–245 shows a compositional bias: low complexity; that stretch reads SSSSSSSSSS. A Phosphoserine; by CSNK1D and CSNK1E modification is found at Ser244. Ser245 is modified (phosphoserine). The Phorbol-ester/DAG-type 2 zinc-finger motif lies at 265-315; it reads PHTFLIHSYTRPTVCQACKKLLKGLFRQGLQCKDCKFNCHKRCATRVPNDC. The region spanning 398–510 is the PH domain; the sequence is TTLREGWVVH…WETAIRQALM (113 aa). Tyr408 is modified (phosphotyrosine). Tyr439 is subject to Phosphotyrosine; by ABL1. Phosphoserine is present on Ser519. Residues 552–808 form the Protein kinase domain; sequence IFPDEVLGSG…VDKSLSHPWL (257 aa). Residues 558–566 and Lys581 contribute to the ATP site; that span reads LGSGQFGVV. The active-site Proton acceptor is the Asp675. Ser707 carries the phosphoserine; by PKC modification. Ser711 is subject to Phosphoserine. Phosphotyrosine; by ABL1 is present on Tyr718. An Important for ABL1-mediated Tyr-718 phosphorylation motif is present at residues 725–727; it reads LNQ. The residue at position 873 (Ser873) is a Phosphoserine; by autocatalysis.

This sequence belongs to the protein kinase superfamily. CAMK Ser/Thr protein kinase family. PKD subfamily. Interacts (via C-terminus) with LCK. Interacts (via N-terminus and zing-finger domain 1 and 2) with PRKCD in response to oxidative stress; the interaction is independent of PRKD2 tyrosine phosphorylation. Requires Mg(2+) as cofactor. In terms of processing, phosphorylation of Ser-873 correlates with the activation status of the kinase. Ser-707 is probably phosphorylated by PKC. Phosphorylation at Ser-244 by CSNK1D and CSNK1E promotes nuclear localization and substrate targeting. Phosphorylation at Ser-244, Ser-707 and Ser-711 is required for nuclear localization. Phosphorylated at Tyr-438 by ABL1 in response to oxidative stress. Phosphorylated at Tyr-718 by ABL1 specifically in response to oxidative stress; requires prior phosphorylation at Ser-707 or/and Ser-711.

The protein localises to the cytoplasm. The protein resides in the cell membrane. Its subcellular location is the golgi apparatus. It localises to the trans-Golgi network. The enzyme catalyses L-seryl-[protein] + ATP = O-phospho-L-seryl-[protein] + ADP + H(+). It catalyses the reaction L-threonyl-[protein] + ATP = O-phospho-L-threonyl-[protein] + ADP + H(+). With respect to regulation, activated by DAG and phorbol esters. Phorbol-ester/DAG-type domains bind DAG, mediating translocation to membranes. Autophosphorylation of Ser-711 and phosphorylation of Ser-707 by PKC relieves auto-inhibition by the PH domain. Catalytic activity is further increased by phosphorylation at Tyr-718 in response to oxidative stress. In terms of biological role, serine/threonine-protein kinase that converts transient diacylglycerol (DAG) signals into prolonged physiological effects downstream of PKC, and is involved in the regulation of cell proliferation via MAPK1/3 (ERK1/2) signaling, oxidative stress-induced NF-kappa-B activation, inhibition of HDAC7 transcriptional repression, signaling downstream of T-cell antigen receptor (TCR) and cytokine production, and plays a role in Golgi membrane trafficking, angiogenesis, secretory granule release and cell adhesion. May potentiate mitogenesis induced by the neuropeptide bombesin by mediating an increase in the duration of MAPK1/3 (ERK1/2) signaling, which leads to accumulation of immediate-early gene products including FOS that stimulate cell cycle progression. In response to oxidative stress, is phosphorylated at Tyr-438 and Tyr-718 by ABL1, which leads to the activation of PRKD2 without increasing its catalytic activity, and mediates activation of NF-kappa-B. In response to the activation of the gastrin receptor CCKBR, is phosphorylated at Ser-244 by CSNK1D and CSNK1E, translocates to the nucleus, phosphorylates HDAC7, leading to nuclear export of HDAC7 and inhibition of HDAC7 transcriptional repression of NR4A1/NUR77. Upon TCR stimulation, is activated independently of ZAP70, translocates from the cytoplasm to the nucleus and is required for interleukin-2 (IL2) promoter up-regulation. During adaptive immune responses, is required in peripheral T-lymphocytes for the production of the effector cytokines IL2 and IFNG after TCR engagement and for optimal induction of antibody responses to antigens. In epithelial cells stimulated with lysophosphatidic acid (LPA), is activated through a PKC-dependent pathway and mediates LPA-stimulated interleukin-8 (IL8) secretion via a NF-kappa-B-dependent pathway. During TCR-induced T-cell activation, interacts with and is activated by the tyrosine kinase LCK, which results in the activation of the NFAT transcription factors. In the trans-Golgi network (TGN), regulates the fission of transport vesicles that are on their way to the plasma membrane and in polarized cells is involved in the transport of proteins from the TGN to the basolateral membrane. Plays an important role in endothelial cell proliferation and migration prior to angiogenesis, partly through modulation of the expression of KDR/VEGFR2 and FGFR1, two key growth factor receptors involved in angiogenesis. In secretory pathway, is required for the release of chromogranin-A (CHGA)-containing secretory granules from the TGN. Downstream of PRKCA, plays important roles in angiotensin-2-induced monocyte adhesion to endothelial cells. In Rattus norvegicus (Rat), this protein is Serine/threonine-protein kinase D2 (Prkd2).